Here is a 205-residue protein sequence, read N- to C-terminus: Large ribosomal subunit protein uL4 (205 aa).

The tract at residues 44 to 79 (RAGTKAQKTRREVSGSGAKPWRQKGTGRARAGSSRS) is disordered.

This sequence belongs to the universal ribosomal protein uL4 family. Part of the 50S ribosomal subunit.

Functionally, one of the primary rRNA binding proteins, this protein initially binds near the 5'-end of the 23S rRNA. It is important during the early stages of 50S assembly. It makes multiple contacts with different domains of the 23S rRNA in the assembled 50S subunit and ribosome. In terms of biological role, forms part of the polypeptide exit tunnel. The sequence is that of Large ribosomal subunit protein uL4 from Coxiella burnetii (strain Dugway 5J108-111).